Consider the following 368-residue polypeptide: Alanine racemase (368 aa).

Residue K40 is the Proton acceptor; specific for D-alanine of the active site. K40 carries the N6-(pyridoxal phosphate)lysine modification. R136 lines the substrate pocket. The active-site Proton acceptor; specific for L-alanine is Y263. M310 provides a ligand contact to substrate.

Belongs to the alanine racemase family. It depends on pyridoxal 5'-phosphate as a cofactor.

The catalysed reaction is L-alanine = D-alanine. The protein operates within amino-acid biosynthesis; D-alanine biosynthesis; D-alanine from L-alanine: step 1/1. Its function is as follows. Catalyzes the interconversion of L-alanine and D-alanine. May also act on other amino acids. The sequence is that of Alanine racemase (alr) from Streptococcus gordonii (strain Challis / ATCC 35105 / BCRC 15272 / CH1 / DL1 / V288).